The chain runs to 361 residues: Peptide chain release factor 1 (361 aa).

Position 235 is an N5-methylglutamine (glutamine 235).

It belongs to the prokaryotic/mitochondrial release factor family. Post-translationally, methylated by PrmC. Methylation increases the termination efficiency of RF1.

It is found in the cytoplasm. Peptide chain release factor 1 directs the termination of translation in response to the peptide chain termination codons UAG and UAA. The chain is Peptide chain release factor 1 from Buchnera aphidicola subsp. Schizaphis graminum (strain Sg).